Here is a 593-residue protein sequence, read N- to C-terminus: ETS-related transcription factor Elf-2 (593 aa).

Residues 1–34 form a disordered region; that stretch reads MASAVVDSGGSALELPSDGGENQEGGDTGPDCPA. Serine 107 carries the phosphoserine modification. The tract at residues 146-199 is disordered; the sequence is VEVSTEESEPMDASPIPTSPDSHEPMKKKKVGRKPKTQQSPVSNGSPELGIKKK. Residues 171-181 show a composition bias toward basic residues; the sequence is MKKKKVGRKPK. Threonine 182 carries the phosphothreonine modification. The span at 182–191 shows a compositional bias: polar residues; the sequence is TQQSPVSNGS. Phosphoserine is present on residues serine 185 and serine 191. Residues 208–290 constitute a DNA-binding region (ETS); sequence TYLWEFLLDL…EGQRLVYQFK (83 aa). Residues 362-383 are disordered; sequence TSPTHDGSSRSPTTTAPVSAAA. Phosphoserine occurs at positions 363 and 372. The segment covering 370 to 383 has biased composition (low complexity); sequence SRSPTTTAPVSAAA. Position 376 is a phosphothreonine (threonine 376). Serine 432 carries the post-translational modification Phosphoserine. Arginine 496 is subject to Omega-N-methylarginine. Threonine 523 bears the Phosphothreonine mark. A Glycyl lysine isopeptide (Lys-Gly) (interchain with G-Cter in SUMO2) cross-link involves residue lysine 538.

Belongs to the ETS family. As to quaternary structure, interacts with LIM domains of LMO2. Interacts via its N-terminal region with RUNX1. As to expression, expressed in all tissues examined. Highest levels in thymocytes and bone marrow.

It is found in the nucleus. Probably transcriptionally activates the LYN and BLK promoters and acts synergistically with RUNX1 to transactivate the BLK promoter. This is ETS-related transcription factor Elf-2 from Mus musculus (Mouse).